A 194-amino-acid chain; its full sequence is Protein GrpE (194 aa).

A disordered region spans residues 1–53 (MVENEKTSVEETEEKAETEDEMLTEDPSNEDSDEANEEGNELSEEEKRIAELE). Residues 10–44 (EETEEKAETEDEMLTEDPSNEDSDEANEEGNELSE) show a composition bias toward acidic residues.

Belongs to the GrpE family. In terms of assembly, homodimer.

It localises to the cytoplasm. Its function is as follows. Participates actively in the response to hyperosmotic and heat shock by preventing the aggregation of stress-denatured proteins, in association with DnaK and GrpE. It is the nucleotide exchange factor for DnaK and may function as a thermosensor. Unfolded proteins bind initially to DnaJ; upon interaction with the DnaJ-bound protein, DnaK hydrolyzes its bound ATP, resulting in the formation of a stable complex. GrpE releases ADP from DnaK; ATP binding to DnaK triggers the release of the substrate protein, thus completing the reaction cycle. Several rounds of ATP-dependent interactions between DnaJ, DnaK and GrpE are required for fully efficient folding. This is Protein GrpE from Halalkalibacterium halodurans (strain ATCC BAA-125 / DSM 18197 / FERM 7344 / JCM 9153 / C-125) (Bacillus halodurans).